Here is a 370-residue protein sequence, read N- to C-terminus: Phospho-N-acetylmuramoyl-pentapeptide-transferase (370 aa).

The next 11 membrane-spanning stretches (helical) occupy residues proline 15 to alanine 35, leucine 44 to valine 64, methionine 93 to glycine 113, alanine 115 to isoleucine 135, leucine 155 to isoleucine 175, phenylalanine 183 to alanine 203, glycine 213 to leucine 233, glycine 240 to valine 260, valine 268 to leucine 288, leucine 296 to phenylalanine 316, and glutamine 347 to phenylalanine 367.

This sequence belongs to the glycosyltransferase 4 family. MraY subfamily. Mg(2+) serves as cofactor.

The protein localises to the cell inner membrane. The enzyme catalyses UDP-N-acetyl-alpha-D-muramoyl-L-alanyl-gamma-D-glutamyl-meso-2,6-diaminopimeloyl-D-alanyl-D-alanine + di-trans,octa-cis-undecaprenyl phosphate = di-trans,octa-cis-undecaprenyl diphospho-N-acetyl-alpha-D-muramoyl-L-alanyl-D-glutamyl-meso-2,6-diaminopimeloyl-D-alanyl-D-alanine + UMP. It participates in cell wall biogenesis; peptidoglycan biosynthesis. Functionally, catalyzes the initial step of the lipid cycle reactions in the biosynthesis of the cell wall peptidoglycan: transfers peptidoglycan precursor phospho-MurNAc-pentapeptide from UDP-MurNAc-pentapeptide onto the lipid carrier undecaprenyl phosphate, yielding undecaprenyl-pyrophosphoryl-MurNAc-pentapeptide, known as lipid I. This chain is Phospho-N-acetylmuramoyl-pentapeptide-transferase, found in Synechococcus sp. (strain CC9311).